Reading from the N-terminus, the 99-residue chain is Large ribosomal subunit protein eL42 (99 aa).

This sequence belongs to the eukaryotic ribosomal protein eL42 family.

The sequence is that of Large ribosomal subunit protein eL42 (RPL44) from Chlamydomonas reinhardtii (Chlamydomonas smithii).